The following is a 382-amino-acid chain: Cytochrome c biogenesis CcmF N-terminal-like mitochondrial protein 1 (382 aa).

4 consecutive transmembrane segments (helical) span residues 1–21, 30–50, 79–99, and 117–137; these read MSIS…FVAF, AFGA…LLFC, HEGS…FFCY, and SLFF…LLRY.

It belongs to the CcmF/CycK/Ccl1/NrfE/CcsA family. Interacts with CCMFN2 and CCMH.

It is found in the mitochondrion inner membrane. Its function is as follows. Forms a complex with CCMFC, CCMFN2 and CCMH that performs the assembly of heme with c-type apocytochromes in mitochondria. The sequence is that of Cytochrome c biogenesis CcmF N-terminal-like mitochondrial protein 1 from Arabidopsis thaliana (Mouse-ear cress).